A 77-amino-acid chain; its full sequence is Acyl carrier protein (77 aa).

The Carrier domain occupies 2–77 (SSIEKRVKEI…DAIDYITEHT (76 aa)). Residue Ser37 is modified to O-(pantetheine 4'-phosphoryl)serine.

This sequence belongs to the acyl carrier protein (ACP) family. In terms of processing, 4'-phosphopantetheine is transferred from CoA to a specific serine of apo-ACP by AcpS. This modification is essential for activity because fatty acids are bound in thioester linkage to the sulfhydryl of the prosthetic group.

It is found in the cytoplasm. It functions in the pathway lipid metabolism; fatty acid biosynthesis. Carrier of the growing fatty acid chain in fatty acid biosynthesis. The polypeptide is Acyl carrier protein (Geobacter sulfurreducens (strain ATCC 51573 / DSM 12127 / PCA)).